The following is a 466-amino-acid chain: NVGFKAGVKEYKLTYYTPDYETLDTDILAAFRVTPQPGVPPEEAGAAVAAESSTGTWTTVWTDGLTNLDRYKGRCYHIEPVAGEENQYIVYVAYPLDLFEEGSVTNMFTSIVGNVFGFKALRVLRLEDLRIPPAYVKTFQGPPHGIQVERDKLNKYGRPLLGCTIKPKLGLSAKNYGRAVYECLRGGLDFTKDDENVNSQPFMRWRDRFVFCVEAIYKAQAETGEIKGHYLNATAGTSEEMIKRAVFARELGVPIVMHDYLTGGFTANTSLSHYCRDNGLLLHIHRAMHAVIDRQKNHGIHFRVLAKALRMSGGDHIHSGTVVGKLEGERDITLGFVVLLRDDYIEKDRSRGIYFTQPWVSLPGVLPVASGGIHVWHMPALTEIFGDDSVLQFGGGTLGHPWGNAPGAVANRVALEACVQARNEGRDLAREGNEIIRKASKWSPELAAACEVWKEIKFEFQAMDTL.

At Lys-5 the chain carries N6,N6,N6-trimethyllysine. Substrate is bound by residues Asn-114 and Thr-164. Lys-166 serves as the catalytic Proton acceptor. Lys-168 contributes to the substrate binding site. Residues Lys-192, Asp-194, and Glu-195 each coordinate Mg(2+). Lys-192 is modified (N6-carboxylysine). Catalysis depends on His-285, which acts as the Proton acceptor. Positions 286, 318, and 370 each coordinate substrate.

It belongs to the RuBisCO large chain family. Type I subfamily. Heterohexadecamer of 8 large chains and 8 small chains. It depends on Mg(2+) as a cofactor.

Its subcellular location is the plastid. The protein resides in the chloroplast. It carries out the reaction 2 (2R)-3-phosphoglycerate + 2 H(+) = D-ribulose 1,5-bisphosphate + CO2 + H2O. It catalyses the reaction D-ribulose 1,5-bisphosphate + O2 = 2-phosphoglycolate + (2R)-3-phosphoglycerate + 2 H(+). Functionally, ruBisCO catalyzes two reactions: the carboxylation of D-ribulose 1,5-bisphosphate, the primary event in carbon dioxide fixation, as well as the oxidative fragmentation of the pentose substrate in the photorespiration process. Both reactions occur simultaneously and in competition at the same active site. This chain is Ribulose bisphosphate carboxylase large chain, found in Drosera regia (King sundew).